We begin with the raw amino-acid sequence, 350 residues long: Methionine import ATP-binding protein MetN 1 (350 aa).

The ABC transporter domain occupies 12-251; it reads IDLKNITVLF…PSREVTQDFV (240 aa). ATP is bound at residue 48–55; that stretch reads GYSGAGKS.

Belongs to the ABC transporter superfamily. Methionine importer (TC 3.A.1.24) family. The complex is composed of two ATP-binding proteins (MetN), two transmembrane proteins (MetI) and a solute-binding protein (MetQ).

The protein resides in the cell membrane. It carries out the reaction L-methionine(out) + ATP + H2O = L-methionine(in) + ADP + phosphate + H(+). The catalysed reaction is D-methionine(out) + ATP + H2O = D-methionine(in) + ADP + phosphate + H(+). Its function is as follows. Part of the ABC transporter complex MetNIQ involved in methionine import. Responsible for energy coupling to the transport system. The sequence is that of Methionine import ATP-binding protein MetN 1 from Oenococcus oeni (strain ATCC BAA-331 / PSU-1).